The following is a 147-amino-acid chain: Myoglobin (147 aa).

Residues 2-141 form the Globin domain; sequence ADFDMVLKCW…IIADMEADYK (140 aa). His-60 serves as a coordination point for nitrite. His-60 is an O2 binding site. A heme b-binding site is contributed by His-89.

This sequence belongs to the globin family. Monomeric.

The protein resides in the cytoplasm. It is found in the sarcoplasm. The enzyme catalyses Fe(III)-heme b-[protein] + nitric oxide + H2O = Fe(II)-heme b-[protein] + nitrite + 2 H(+). The catalysed reaction is H2O2 + AH2 = A + 2 H2O. Its function is as follows. Monomeric heme protein which primary function is to store oxygen and facilitate its diffusion within muscle tissues. Reversibly binds oxygen through a pentacoordinated heme iron and enables its timely and efficient release as needed during periods of heightened demand. Depending on the oxidative conditions of tissues and cells, and in addition to its ability to bind oxygen, it also has a nitrite reductase activity whereby it regulates the production of bioactive nitric oxide. Under stress conditions, like hypoxia and anoxia, it also protects cells against reactive oxygen species thanks to its pseudoperoxidase activity. The polypeptide is Myoglobin (mb) (Notothenia neglecta (Yellowbelly rockcod)).